Consider the following 1024-residue polypeptide: Unconventional myosin-Ig (1024 aa).

The region spanning Tyr-15–Ala-713 is the Myosin motor domain. Residue Gly-108–Thr-115 participates in ATP binding. The interval Met-590–Glu-612 is actin-binding. The region spanning Ile-716 to Ile-745 is the IQ domain. Residues Gly-830–Ser-1023 form the TH1 domain. The segment at Val-999 to His-1024 is disordered.

It belongs to the TRAFAC class myosin-kinesin ATPase superfamily. Myosin family. In terms of assembly, interacts with calmodulin; via its IQ motifs. Specifically expressed in hematopoietic cells. Detected in adult tissues of the immune system such as thymus, lymph nodes and spleen, but not in brain, lung, heart, liver, small intestine, testis and kidney (at protein level). Highly expressed in T-lymphocytes; constitutes the most highly expressed class I myosin in naive CD4 and CD8 T-cells. Also present in B-lymphocytes.

The protein resides in the cell membrane. The protein localises to the cell projection. Its subcellular location is the phagocytic cup. Its function is as follows. Unconventional myosin required during immune response for detection of rare antigen-presenting cells by regulating T-cell migration. Unconventional myosins are actin-based motor molecules with ATPase activity and serve in intracellular movements. Acts as a regulator of T-cell migration by generating membrane tension, enforcing cell-intrinsic meandering search, thereby enhancing detection of rare antigens during lymph-node surveillance, enabling pathogen eradication. Also required in B-cells, where it regulates different membrane/cytoskeleton-dependent processes. Involved in Fc-gamma receptor (Fc-gamma-R) phagocytosis. The protein is Unconventional myosin-Ig (Myo1g) of Mus musculus (Mouse).